Consider the following 526-residue polypeptide: Peptide chain release factor 3 (526 aa).

A tr-type G domain is found at 8 to 277 (SKRRTFAIIS…GLTRWAPAPQ (270 aa)). Residues 17–24 (SHPDAGKT), 85–89 (DTPGH), and 139–142 (NKLD) each bind GTP.

Belongs to the TRAFAC class translation factor GTPase superfamily. Classic translation factor GTPase family. PrfC subfamily.

It is found in the cytoplasm. Its function is as follows. Increases the formation of ribosomal termination complexes and stimulates activities of RF-1 and RF-2. It binds guanine nucleotides and has strong preference for UGA stop codons. It may interact directly with the ribosome. The stimulation of RF-1 and RF-2 is significantly reduced by GTP and GDP, but not by GMP. The polypeptide is Peptide chain release factor 3 (Vibrio atlanticus (strain LGP32) (Vibrio splendidus (strain Mel32))).